The following is a 155-amino-acid chain: Small ribosomal subunit protein uS7cz/uS7cy (155 aa).

The protein belongs to the universal ribosomal protein uS7 family. Part of the 30S ribosomal subunit.

It localises to the plastid. Its subcellular location is the chloroplast. In terms of biological role, one of the primary rRNA binding proteins, it binds directly to 16S rRNA where it nucleates assembly of the head domain of the 30S subunit. This is Small ribosomal subunit protein uS7cz/uS7cy (rps7-A) from Guizotia abyssinica (Niger).